A 273-amino-acid chain; its full sequence is Dermonecrotic toxin LapSicTox-alphaIB2 (273 aa).

Residue His-5 is part of the active site. Glu-25 and Asp-27 together coordinate Mg(2+). Catalysis depends on His-41, which acts as the Nucleophile. 2 disulfide bridges follow: Cys-45-Cys-51 and Cys-47-Cys-190. Asp-85 is a Mg(2+) binding site. Asn-250 carries an N-linked (GlcNAc...) asparagine glycan.

Belongs to the arthropod phospholipase D family. Class II subfamily. Mg(2+) is required as a cofactor. Expressed by the venom gland.

The protein resides in the secreted. It carries out the reaction an N-(acyl)-sphingosylphosphocholine = an N-(acyl)-sphingosyl-1,3-cyclic phosphate + choline. The enzyme catalyses an N-(acyl)-sphingosylphosphoethanolamine = an N-(acyl)-sphingosyl-1,3-cyclic phosphate + ethanolamine. It catalyses the reaction a 1-acyl-sn-glycero-3-phosphocholine = a 1-acyl-sn-glycero-2,3-cyclic phosphate + choline. The catalysed reaction is a 1-acyl-sn-glycero-3-phosphoethanolamine = a 1-acyl-sn-glycero-2,3-cyclic phosphate + ethanolamine. Dermonecrotic toxins cleave the phosphodiester linkage between the phosphate and headgroup of certain phospholipids (sphingolipid and lysolipid substrates), forming an alcohol (often choline) and a cyclic phosphate. This toxin acts on sphingomyelin (SM). It may also act on ceramide phosphoethanolamine (CPE), lysophosphatidylcholine (LPC) and lysophosphatidylethanolamine (LPE), but not on lysophosphatidylserine (LPS), and lysophosphatidylglycerol (LPG). It acts by transphosphatidylation, releasing exclusively cyclic phosphate products as second products. Induces dermonecrosis, hemolysis, increased vascular permeability, edema, inflammatory response, and platelet aggregation. This is Dermonecrotic toxin LapSicTox-alphaIB2 from Loxosceles apachea (Apache recluse spider).